The following is a 160-amino-acid chain: MMERFEKIEMKIPAKAEYVAIIRLTMAGVANRMGFAYDDIEDMKIAISEACTNIVQHAYKEDVGEITIVFGLYEDRLEIMAADNGVSFDFNSLKSKVGPYDINKPVEHLPENGLGLYLINTLMDDIQIMHDEGMTVLMTKYIQREQVENDGNPISTYKSY.

It belongs to the anti-sigma-factor family.

The enzyme catalyses L-seryl-[protein] + ATP = O-phospho-L-seryl-[protein] + ADP + H(+). It catalyses the reaction L-threonyl-[protein] + ATP = O-phospho-L-threonyl-[protein] + ADP + H(+). Its function is as follows. Negative regulator of sigma-B activity. Phosphorylates and inactivates its specific antagonist protein, RsbV. Upon phosphorylation of RsbV, RsbW is released and binds to sigma-B, thereby blocking its ability to form an RNA polymerase holoenzyme (E-sigma-B). The polypeptide is Serine-protein kinase RsbW (Bacillus cereus (strain B4264)).